A 509-amino-acid polypeptide reads, in one-letter code: DNA nucleotidylexotransferase (509 aa).

Residues 1-25 form a disordered region; the sequence is MDPLCTASSGPRKKRPRQVGASMAS. The short motif at 11 to 17 is the Nuclear localization signal element; sequence PRKKRPR. Residues 27 to 124 enclose the BRCT domain; that stretch reads PHDIKFQNLV…KPVEITGKHQ (98 aa). A mediates interaction with DNTTIP2 region spans residues 151 to 509; the sequence is SQYACQRKTT…DYIEPWERNA (359 aa). Residues 258–262 form an involved in DNA binding region; sequence VGLKT. Residues 333–338 and 342–345 contribute to the a 2'-deoxyribonucleoside 5'-triphosphate site; these read GFRRGK and HDVD. Mg(2+) is bound by residues D343, D345, and D433. Position 448–449 (448–449) interacts with a 2'-deoxyribonucleoside 5'-triphosphate; the sequence is GW.

This sequence belongs to the DNA polymerase type-X family. As to quaternary structure, interacts with PRP19 and DNTTIP1. Forms a ternary complex with DNTTIP2 and core histone. Released from this complex by PCNA. Interacts with TRERF1. The cofactor is Mg(2+).

It localises to the nucleus. The catalysed reaction is DNA(n) + a 2'-deoxyribonucleoside 5'-triphosphate = DNA(n+1) + diphosphate. Its function is as follows. Template-independent DNA polymerase which catalyzes the random addition of deoxynucleoside 5'-triphosphate to the 3'-end of a DNA initiator. One of the in vivo functions of this enzyme is the addition of nucleotides at the junction (N region) of rearranged Ig heavy chain and T-cell receptor gene segments during the maturation of B- and T-cells. The protein is DNA nucleotidylexotransferase (DNTT) of Bos taurus (Bovine).